Here is a 458-residue protein sequence, read N- to C-terminus: Bifunctional protein GlmU (458 aa).

A pyrophosphorylase region spans residues 1–224 (MTVIALAAGK…PKVAVGVNNQ (224 aa)). UDP-N-acetyl-alpha-D-glucosamine-binding positions include 6-9 (LAAG), Lys-20, Gln-71, and 76-77 (GT). Residue Asp-99 participates in Mg(2+) binding. 4 residues coordinate UDP-N-acetyl-alpha-D-glucosamine: Gly-136, Glu-150, Asn-165, and Asn-222. Asn-222 is a Mg(2+) binding site. Positions 225-245 (LELARATRLLFKRKALRLMED) are linker. An N-acetyltransferase region spans residues 246 to 458 (GVLMIDPRTV…TAETEEKEQV (213 aa)). The UDP-N-acetyl-alpha-D-glucosamine site is built by Arg-328 and Lys-346. The active-site Proton acceptor is His-358. The UDP-N-acetyl-alpha-D-glucosamine site is built by Tyr-361 and Asn-372. Residues 381 to 382 (NY), Ser-401, Ser-419, and Arg-436 contribute to the acetyl-CoA site.

This sequence in the N-terminal section; belongs to the N-acetylglucosamine-1-phosphate uridyltransferase family. In the C-terminal section; belongs to the transferase hexapeptide repeat family. In terms of assembly, homotrimer. Requires Mg(2+) as cofactor.

Its subcellular location is the cytoplasm. It carries out the reaction alpha-D-glucosamine 1-phosphate + acetyl-CoA = N-acetyl-alpha-D-glucosamine 1-phosphate + CoA + H(+). It catalyses the reaction N-acetyl-alpha-D-glucosamine 1-phosphate + UTP + H(+) = UDP-N-acetyl-alpha-D-glucosamine + diphosphate. Its pathway is nucleotide-sugar biosynthesis; UDP-N-acetyl-alpha-D-glucosamine biosynthesis; N-acetyl-alpha-D-glucosamine 1-phosphate from alpha-D-glucosamine 6-phosphate (route II): step 2/2. The protein operates within nucleotide-sugar biosynthesis; UDP-N-acetyl-alpha-D-glucosamine biosynthesis; UDP-N-acetyl-alpha-D-glucosamine from N-acetyl-alpha-D-glucosamine 1-phosphate: step 1/1. It functions in the pathway bacterial outer membrane biogenesis; LPS lipid A biosynthesis. Functionally, catalyzes the last two sequential reactions in the de novo biosynthetic pathway for UDP-N-acetylglucosamine (UDP-GlcNAc). The C-terminal domain catalyzes the transfer of acetyl group from acetyl coenzyme A to glucosamine-1-phosphate (GlcN-1-P) to produce N-acetylglucosamine-1-phosphate (GlcNAc-1-P), which is converted into UDP-GlcNAc by the transfer of uridine 5-monophosphate (from uridine 5-triphosphate), a reaction catalyzed by the N-terminal domain. The polypeptide is Bifunctional protein GlmU (Bdellovibrio bacteriovorus (strain ATCC 15356 / DSM 50701 / NCIMB 9529 / HD100)).